The following is a 126-amino-acid chain: MSLKKEEVLDAISEMSVMDIMQLISMIEKKFGVSAASSHISSVENVVTESESTQVEQTEFTVILSSIGGNKIPVIKAVRSITGLGLKEAKDLVESAPVTLKESVSKDDADNLKKTLESVGASVEIK.

It belongs to the bacterial ribosomal protein bL12 family. As to quaternary structure, homodimer. Part of the ribosomal stalk of the 50S ribosomal subunit. Forms a multimeric L10(L12)X complex, where L10 forms an elongated spine to which 2 to 4 L12 dimers bind in a sequential fashion. Binds GTP-bound translation factors.

Forms part of the ribosomal stalk which helps the ribosome interact with GTP-bound translation factors. Is thus essential for accurate translation. This Blochmanniella floridana protein is Large ribosomal subunit protein bL12.